Here is a 20-residue protein sequence, read N- to C-terminus: Antimicrobial peptide EP-20 (20 aa).

The disordered stretch occupies residues 1-20 (EGPVGLADPDGPASAPLGAP).

It localises to the secreted. The synthetic peptide inhibits growth of fungus P.capsici and partially that of V.dahliae, F.graminearum and F.omysporum. The polypeptide is Antimicrobial peptide EP-20 (Xenorhabdus budapestensis).